A 480-amino-acid polypeptide reads, in one-letter code: Glutamyl-tRNA(Gln) amidotransferase subunit A (480 aa).

Residues Lys70 and Ser145 each act as charge relay system in the active site. The active-site Acyl-ester intermediate is Ser169.

This sequence belongs to the amidase family. GatA subfamily. In terms of assembly, heterotrimer of A, B and C subunits.

It carries out the reaction L-glutamyl-tRNA(Gln) + L-glutamine + ATP + H2O = L-glutaminyl-tRNA(Gln) + L-glutamate + ADP + phosphate + H(+). Its function is as follows. Allows the formation of correctly charged Gln-tRNA(Gln) through the transamidation of misacylated Glu-tRNA(Gln) in organisms which lack glutaminyl-tRNA synthetase. The reaction takes place in the presence of glutamine and ATP through an activated gamma-phospho-Glu-tRNA(Gln). The polypeptide is Glutamyl-tRNA(Gln) amidotransferase subunit A (Lactobacillus delbrueckii subsp. bulgaricus (strain ATCC 11842 / DSM 20081 / BCRC 10696 / JCM 1002 / NBRC 13953 / NCIMB 11778 / NCTC 12712 / WDCM 00102 / Lb 14)).